We begin with the raw amino-acid sequence, 504 residues long: Maturase K (504 aa).

It belongs to the intron maturase 2 family. MatK subfamily.

Its subcellular location is the plastid. It localises to the chloroplast. Functionally, usually encoded in the trnK tRNA gene intron. Probably assists in splicing its own and other chloroplast group II introns. This Guizotia abyssinica (Niger) protein is Maturase K.